Consider the following 681-residue polypeptide: Sorting nexin-41 (681 aa).

Residues 1–12 (MSTDNLFEDIEQ) show a composition bias toward acidic residues. The segment at 1–94 (MSTDNLFEDI…HNTSLNNGYP (94 aa)) is disordered. Positions 13–24 (DNNPSFYGNPSI) are enriched in polar residues. In terms of domain architecture, PX spans 113 to 236 (NDSQLQVDII…KFFDPNYELC (124 aa)). The a 1,2-diacyl-sn-glycero-3-phospho-(1D-myo-inositol-3-phosphate) site is built by arginine 151, serine 153, lysine 177, and arginine 200. Disordered stretches follow at residues 475–505 (LASR…TENF) and 558–597 (TATG…QTSI). Low complexity-rich tracts occupy residues 482-497 (DNDS…NNND) and 558-589 (TATG…QSQS).

The protein belongs to the sorting nexin family.

It localises to the endosome membrane. It is found in the endomembrane system. Its function is as follows. May be required for cytoplasm to vacuole transport (Cvt) and pexophagy. The chain is Sorting nexin-41 (SNX41) from Candida albicans (strain SC5314 / ATCC MYA-2876) (Yeast).